The following is a 907-amino-acid chain: Probable dipeptidyl-aminopeptidase B (907 aa).

Over residues 1 to 26 (MPRQRAPKEEEAELLTKQERSTRSSE) the composition is skewed to basic and acidic residues. The disordered stretch occupies residues 1–70 (MPRQRAPKEE…EKYTDEDDEA (70 aa)). Topologically, residues 1–93 (MPRQRAPKEE…PVAVDKKTRR (93 aa)) are cytoplasmic. Residues 30–44 (DASVSSISTTSLVLE) are compositionally biased toward low complexity. A helical; Signal-anchor for type II membrane protein transmembrane segment spans residues 94–114 (WLWIVGIACVTGWALALVFFL). Topologically, residues 115–907 (MSGSYKHVST…SQVDARLERR (793 aa)) are vacuolar. N-linked (GlcNAc...) asparagine glycosylation is present at Asn-560. The active-site Charge relay system is the Ser-751. Asn-805 is a glycosylation site (N-linked (GlcNAc...) asparagine). Active-site charge relay system residues include Asp-828 and His-861.

The protein belongs to the peptidase S9B family.

The protein localises to the vacuole membrane. It catalyses the reaction Release of an N-terminal dipeptide, Xaa-Yaa-|-Zaa-, from a polypeptide, preferentially when Yaa is Pro, provided Zaa is neither Pro nor hydroxyproline.. Functionally, type IV dipeptidyl-peptidase which removes N-terminal dipeptides sequentially from polypeptides having unsubstituted N-termini provided that the penultimate residue is proline. In Pyrenophora teres f. teres (strain 0-1) (Barley net blotch fungus), this protein is Probable dipeptidyl-aminopeptidase B (dapB).